The primary structure comprises 569 residues: Dolichol kinase EVAN (569 aa).

Residues methionine 1–arginine 22 lie on the Cytoplasmic side of the membrane. The helical transmembrane segment at isoleucine 23–leucine 43 threads the bilayer. At serine 44–glycine 67 the chain is on the lumenal side. The helical transmembrane segment at alanine 68–valine 88 threads the bilayer. Residues glutamine 89–threonine 108 lie on the Cytoplasmic side of the membrane. A helical transmembrane segment spans residues methionine 109–methionine 129. Residues serine 130–arginine 147 lie on the Lumenal side of the membrane. The chain crosses the membrane as a helical span at residues valine 148–serine 168. The Cytoplasmic portion of the chain corresponds to histidine 169 to methionine 178. A helical transmembrane segment spans residues leucine 179–phenylalanine 199. Residues proline 200–glutamate 207 are Lumenal-facing. The chain crosses the membrane as a helical span at residues alanine 208–alanine 228. At lysine 229–glycine 252 the chain is on the cytoplasmic side. Residues isoleucine 253 to leucine 273 form a helical membrane-spanning segment. Topologically, residues histidine 274–serine 296 are lumenal. Asparagine 289 is a glycosylation site (N-linked (GlcNAc...) asparagine). The helical transmembrane segment at valine 297 to phenylalanine 317 threads the bilayer. At valine 318–arginine 340 the chain is on the cytoplasmic side. The helical transmembrane segment at leucine 341–isoleucine 361 threads the bilayer. At serine 362–arginine 369 the chain is on the lumenal side. Residues isoleucine 370–leucine 390 traverse the membrane as a helical segment. Topologically, residues glutamine 391–lysine 393 are cytoplasmic. A helical transmembrane segment spans residues phenylalanine 394–isoleucine 414. At tryptophan 415–leucine 440 the chain is on the lumenal side. Residues isoleucine 441 to phenylalanine 461 traverse the membrane as a helical segment. The Cytoplasmic segment spans residues asparagine 462–arginine 464. A helical membrane pass occupies residues alanine 465–valine 485. The Lumenal segment spans residues glycine 486–glycine 508. Residues histidine 487–glutamate 503 are CTP-binding. Residues isoleucine 509–isoleucine 529 traverse the membrane as a helical segment. Residues leucine 530–glutamate 548 lie on the Cytoplasmic side of the membrane. Residues alanine 549–leucine 569 form a helical membrane-spanning segment.

Belongs to the polyprenol kinase family.

It is found in the endoplasmic reticulum membrane. It carries out the reaction a di-trans,poly-cis-dolichol + CTP = a di-trans,poly-cis-dolichyl phosphate + CDP + H(+). Functionally, essential for pollen development. Involved in protein N-glycosylation in the endoplasmic reticulum (ER), especially in the female gametophyte. Mediates pollen tube (PT) reception in synergids through protein glycosylation. The protein is Dolichol kinase EVAN of Arabidopsis thaliana (Mouse-ear cress).